We begin with the raw amino-acid sequence, 129 residues long: MAASSLNLLLILSLLTFISLQRSESLSDNPSLTLLPDGFDWPISHSDEFDIIDGEESFEVTEEDDGVTDRRSLYWRRTKYYISYGALSANRVPCPPRSGRSYYTHNCFRARGPVHPYSRGCSSITRCRR.

The first 23 residues, 1–23 (MAASSLNLLLILSLLTFISLQRS), serve as a signal peptide directing secretion. Residues 24–76 (ESLSDNPSLTLLPDGFDWPISHSDEFDIIDGEESFEVTEEDDGVTDRRSLYWR) constitute a propeptide, removed in mature form. Intrachain disulfides connect C94–C107 and C121–C127.

This sequence belongs to the plant rapid alkalinization factor (RALF) family. In terms of processing, proteolytically cleaved, probably by S1P, a subtilisin-like serine protease (subtilase). Expressed in roots, stems and leaves.

The protein resides in the secreted. Cell signaling peptide that may regulate plant stress, growth, and development. Mediates a rapid alkalinization of extracellular space by mediating a transient increase in the cytoplasmic Ca(2+) concentration leading to a calcium-dependent signaling events through a cell surface receptor and a concomitant activation of some intracellular mitogen-activated protein kinases. This is Protein RALF-like 34 (RALFL34) from Arabidopsis thaliana (Mouse-ear cress).